Here is a 313-residue protein sequence, read N- to C-terminus: Cytosolic Fe-S cluster assembly factor NUBP1 homolog (313 aa).

The segment at 1-25 is disordered; that stretch reads MSDVPDDANAGCPGTGSAGAGKASG. Cys12, Cys26, Cys29, and Cys35 together coordinate [4Fe-4S] cluster. 66 to 73 contributes to the ATP binding site; that stretch reads GKGGVGKS. The [4Fe-4S] cluster site is built by Cys240 and Cys243.

Belongs to the Mrp/NBP35 ATP-binding proteins family. NUBP1/NBP35 subfamily. As to quaternary structure, heterotetramer of 2 NUBP1 and 2 NUBP2 chains. [4Fe-4S] cluster serves as cofactor. Expressed in head amphid and labial ciliated sensory neurons and tail phasmid ciliated chemosensory neurons.

It localises to the cytoplasm. The protein resides in the cell projection. In terms of biological role, component of the cytosolic iron-sulfur (Fe/S) protein assembly (CIA) machinery. Required for maturation of extramitochondrial Fe-S proteins. The NUBP1-NUBP2 heterotetramer forms a Fe-S scaffold complex, mediating the de novo assembly of an Fe-S cluster and its transfer to target apoproteins. Regulates cilium formation and structure. The protein is Cytosolic Fe-S cluster assembly factor NUBP1 homolog of Caenorhabditis elegans.